The following is a 413-amino-acid chain: Ribulose bisphosphate carboxylase/oxygenase activase, chloroplastic (413 aa).

The N-terminal 54 residues, 1–54 (MAATVSTIGAVNRTTLNNSNYGGLVPNSAFLGSRLKVSSRFTTSKMVTGNFKIV), are a transit peptide targeting the chloroplast. 162-169 (GGKGQGKS) provides a ligand contact to ATP.

This sequence belongs to the RuBisCO activase family.

It is found in the plastid. It localises to the chloroplast stroma. Its function is as follows. Activation of RuBisCO (ribulose-1,5-bisphosphate carboxylase/oxygenase; EC 4.1.1.39) involves the ATP-dependent carboxylation of the epsilon-amino group of lysine leading to a carbamate structure. The sequence is that of Ribulose bisphosphate carboxylase/oxygenase activase, chloroplastic from Cucumis sativus (Cucumber).